Here is a 167-residue protein sequence, read N- to C-terminus: Phosphopantetheine adenylyltransferase (167 aa).

Residue Ser9 coordinates substrate. Residues 9 to 10 and His17 contribute to the ATP site; that span reads SF. Lys41, Leu73, and Lys87 together coordinate substrate. ATP contacts are provided by residues 88 to 90, Glu98, and 123 to 129; these read GLR and YSYLSSS.

It belongs to the bacterial CoaD family. Homohexamer. It depends on Mg(2+) as a cofactor.

The protein localises to the cytoplasm. The catalysed reaction is (R)-4'-phosphopantetheine + ATP + H(+) = 3'-dephospho-CoA + diphosphate. It participates in cofactor biosynthesis; coenzyme A biosynthesis; CoA from (R)-pantothenate: step 4/5. Its function is as follows. Reversibly transfers an adenylyl group from ATP to 4'-phosphopantetheine, yielding dephospho-CoA (dPCoA) and pyrophosphate. In Caldicellulosiruptor bescii (strain ATCC BAA-1888 / DSM 6725 / KCTC 15123 / Z-1320) (Anaerocellum thermophilum), this protein is Phosphopantetheine adenylyltransferase.